We begin with the raw amino-acid sequence, 234 residues long: Thymidine kinase, cytosolic (234 aa).

A Phosphoserine modification is found at S13. Residues 26 to 33 (GPMFSGKS), 58 to 60 (DTR), and 97 to 100 (DEGQ) contribute to the ATP site. Residue E98 is the Proton acceptor of the active site. F128 provides a ligand contact to substrate. 2 residues coordinate Zn(2+): C153 and C156. Residues 172 to 176 (VEVIG) and Y181 each bind substrate. C185 and C188 together coordinate Zn(2+). The KEN box motif lies at 203–205 (KEN).

The protein belongs to the thymidine kinase family. In terms of assembly, homotetramer. Tetramerization from dimerization is induced by ATP and increases catalytic efficiency due to a high affinity for thymidine. Tetramerization is inhibited by phosphorylation at Ser-13. Interacts (via the KEN box) with FZR1. In terms of processing, phosphorylated on Ser-13 in mitosis. Phosphorylation of Ser-13 by CDK1 during mitosis reduces homotetramerization and catalytic efficiency when DNA replication is complete and intracellular TK1 is still present at a high level. Polyubiquitinated. Postmitosis, ubiquitination leads to proteasomal degradation. The KEN box sequence located at the C-terminal region targets for degradation by the anaphase promoting complex (APC/C) activated and rate-limited by FZR1.

It is found in the cytoplasm. It carries out the reaction thymidine + ATP = dTMP + ADP + H(+). Cell-cycle-regulated enzyme of importance in nucleotide metabolism. Catalyzes the first enzymatic step in the salvage pathway converting thymidine into thymidine monophosphate. Transcriptional regulation limits expression to the S phase of the cell cycle and transient expression coincides with the oscillation in the intracellular dTTP concentration. The protein is Thymidine kinase, cytosolic (TK1) of Cricetulus griseus (Chinese hamster).